Consider the following 624-residue polypeptide: Hemocyanin E chain (624 aa).

Cu cation-binding residues include H169, H173, H200, H320, H324, and H360. N445 carries N-linked (GlcNAc...) asparagine glycosylation. C529 and C577 are joined by a disulfide.

The protein belongs to the tyrosinase family. Hemocyanin subfamily. As to quaternary structure, tarantula hemocyanin is a 24-chain polymer with seven different chains identified. Hemolymph.

Its subcellular location is the secreted. It localises to the extracellular space. In terms of biological role, hemocyanins are copper-containing oxygen carriers occurring freely dissolved in the hemolymph of many mollusks and arthropods. The sequence is that of Hemocyanin E chain (HCE) from Aphonopelma sp. (American tarantula).